A 260-amino-acid polypeptide reads, in one-letter code: MSIHLVIIDALNLIRRVHSAQPDPTDIARTITTTGRTLTRILSEAQPTHIIAVFDHHEQDRGWRAEILPDYKQNRKPMPEPLIKGLDALQQAWWEQGIDSLLSEGDEADDLVATLATKVASHGEKVTIVSTDKGYCQLLSPTLQIRDYFQHRWLDEPFIEKEFGVKPSQLADYWGLTGISSSQVPGVPGVGPKAAKEILTQFEDIEAAYASEELVPKYRKKLDEHIESARLCKRVAALKCDIDLGFNLQDIRFTGPNKAQ.

Residue Asp-109 participates in Mg(2+) binding. Residues 165–259 form the 5'-3' exonuclease domain; that stretch reads VKPSQLADYW…DIRFTGPNKA (95 aa). K(+)-binding residues include Leu-176, Pro-185, Val-187, and Val-190. An interaction with DNA region spans residues 189–194; sequence GVGPKA.

The protein belongs to the Xni family. It depends on Mg(2+) as a cofactor. K(+) serves as cofactor.

Has flap endonuclease activity. During DNA replication, flap endonucleases cleave the 5'-overhanging flap structure that is generated by displacement synthesis when DNA polymerase encounters the 5'-end of a downstream Okazaki fragment. In Vibrio campbellii (strain ATCC BAA-1116), this protein is Flap endonuclease Xni.